The primary structure comprises 750 residues: Dual specificity tyrosine-phosphorylation-regulated kinase 1A (750 aa).

Disordered stretches follow at residues 56–81 (ALPY…RDPA) and 104–129 (YAKK…KVYN). A Bipartite nuclear localization signal motif is present at residues 109–126 (RRHQQGQGDDSSHKKERK). The region spanning 151–471 (YEIDSLIGKG…PYYALQHSFF (321 aa)) is the Protein kinase domain. ATP-binding positions include 157-165 (IGKGSFGQV), lysine 180, and 230-233 (FEML). Aspartate 279 functions as the Proton acceptor in the catalytic mechanism. Disordered stretches follow at residues 400 to 434 (TKDG…AGES), 477 to 531 (EGTN…RHSG), 583 to 666 (SQKN…GNQA), and 731 to 750 (DRED…VASS). The segment covering 477 to 493 (EGTNTSNSVSTSPAMEQ) has biased composition (polar residues). Residues 494–517 (SQSSGTTSSTSSSSGGSSGTSNSG) show a composition bias toward low complexity. The interval 584–612 (QKNVPHHHGNGSHHHHHHHHHHHGQHILS) is histidine-rich domain (HRD). Basic residues predominate over residues 587–608 (VPHHHGNGSHHHHHHHHHHHGQ). Residues 610 to 621 (ILSNRTRTRIYN) are compositionally biased toward polar residues. Over residues 622 to 659 (SPSTSSSTQDSMDIGNSHHSMTSLSSSTTSSSTSSSST) the composition is skewed to low complexity. The span at 741 to 750 (CVQQSPVASS) shows a compositional bias: polar residues.

The protein belongs to the protein kinase superfamily. CMGC Ser/Thr protein kinase family. MNB/DYRK subfamily. Autophosphorylated on tyrosine residues.

Its subcellular location is the nucleus. The protein resides in the nucleus speckle. The catalysed reaction is L-seryl-[protein] + ATP = O-phospho-L-seryl-[protein] + ADP + H(+). It carries out the reaction L-threonyl-[protein] + ATP = O-phospho-L-threonyl-[protein] + ADP + H(+). It catalyses the reaction L-tyrosyl-[protein] + ATP = O-phospho-L-tyrosyl-[protein] + ADP + H(+). The enzyme catalyses [DNA-directed RNA polymerase] + ATP = phospho-[DNA-directed RNA polymerase] + ADP + H(+). Its function is as follows. Dual-specificity kinase which possesses both serine/threonine and tyrosine kinase activities. Exhibits a substrate preference for proline at position P+1 and arginine at position P-3. Plays an important role in double-strand breaks (DSBs) repair following DNA damage. Mechanistically, phosphorylates RNF169 and increases its ability to block accumulation of TP53BP1 at the DSB sites thereby promoting homologous recombination repair (HRR). Also acts as a positive regulator of transcription by acting as a CTD kinase that mediates phosphorylation of the CTD (C-terminal domain) of the large subunit of RNA polymerase II (RNAP II) POLR2A. Modulates alternative splicing by phosphorylating the splice factor SRSF6. Phosphorylates SEPTIN4, SEPTIN5 and SF3B1. The protein is Dual specificity tyrosine-phosphorylation-regulated kinase 1A of Xenopus laevis (African clawed frog).